The sequence spans 308 residues: Ornithine carbamoyltransferase (308 aa).

Residues 56 to 59 (STRT), Q83, R107, and 134 to 137 (HPCQ) each bind carbamoyl phosphate. Residues N165, D225, and 229–230 (SM) each bind L-ornithine. Carbamoyl phosphate is bound by residues 266 to 267 (CL) and R294.

The protein belongs to the aspartate/ornithine carbamoyltransferase superfamily. OTCase family.

Its subcellular location is the cytoplasm. The enzyme catalyses carbamoyl phosphate + L-ornithine = L-citrulline + phosphate + H(+). It participates in amino-acid biosynthesis; L-arginine biosynthesis; L-arginine from L-ornithine and carbamoyl phosphate: step 1/3. Functionally, reversibly catalyzes the transfer of the carbamoyl group from carbamoyl phosphate (CP) to the N(epsilon) atom of ornithine (ORN) to produce L-citrulline. This is Ornithine carbamoyltransferase from Ruegeria pomeroyi (strain ATCC 700808 / DSM 15171 / DSS-3) (Silicibacter pomeroyi).